Consider the following 269-residue polypeptide: Ubiquinone/menaquinone biosynthesis C-methyltransferase UbiE (269 aa).

S-adenosyl-L-methionine-binding positions include T92, D113, and 141 to 142 (NA).

This sequence belongs to the class I-like SAM-binding methyltransferase superfamily. MenG/UbiE family.

The enzyme catalyses a 2-demethylmenaquinol + S-adenosyl-L-methionine = a menaquinol + S-adenosyl-L-homocysteine + H(+). It carries out the reaction a 2-methoxy-6-(all-trans-polyprenyl)benzene-1,4-diol + S-adenosyl-L-methionine = a 5-methoxy-2-methyl-3-(all-trans-polyprenyl)benzene-1,4-diol + S-adenosyl-L-homocysteine + H(+). It functions in the pathway quinol/quinone metabolism; menaquinone biosynthesis; menaquinol from 1,4-dihydroxy-2-naphthoate: step 2/2. The protein operates within cofactor biosynthesis; ubiquinone biosynthesis. In terms of biological role, methyltransferase required for the conversion of demethylmenaquinol (DMKH2) to menaquinol (MKH2) and the conversion of 2-polyprenyl-6-methoxy-1,4-benzoquinol (DDMQH2) to 2-polyprenyl-3-methyl-6-methoxy-1,4-benzoquinol (DMQH2). The chain is Ubiquinone/menaquinone biosynthesis C-methyltransferase UbiE from Brucella suis biovar 1 (strain 1330).